Reading from the N-terminus, the 310-residue chain is Isoflavone reductase homolog A622 (310 aa).

Residues 13–19 (GGTGYIG), arginine 38, and lysine 47 each bind NADP(+). Lysine 135 serves as the catalytic Proton acceptor. Arginine 139 contributes to the NADP(+) binding site.

The protein belongs to the NmrA-type oxidoreductase family. Isoflavone reductase subfamily. As to quaternary structure, monomer.

It localises to the cytoplasm. The protein operates within alkaloid biosynthesis; nicotine biosynthesis. In terms of biological role, NADPH-binding protein. Involved in the biosynthesis of pyridine alkaloid natural products, leading mainly to the production of anabasine, anatabine, nicotine and nornicotine, effective deterrents against herbivores with antiparasitic and pesticide properties (neurotoxins); nornicotine serves as the precursor in the synthesis of the carcinogen compound N'-nitrosonornicotine (NNN). Reductase involved in a late step of tobacco alkaloid biosynthesis. Triggers either the formation of a nicotinic acid-derived precursor or the final condensation reaction of tobacco alkaloids. This is Isoflavone reductase homolog A622 from Nicotiana glauca (Glaucous tobacco).